Consider the following 478-residue polypeptide: Septin-4 (478 aa).

Disordered regions lie at residues 40-74 (DFSG…LYDD) and 87-115 (ADNQ…LDPY). A compositionally biased stretch (low complexity) spans 95 to 108 (APAPLSPSARPRSP). S117 and S118 each carry phosphoserine. Residues 141-414 (KGFDFTLMVA…ENYRAQCIQS (274 aa)) enclose the Septin-type G domain. The segment at 151-158 (GESGLGKS) is G1 motif. Residues 151–158 (GESGLGKS) and T185 contribute to the GTP site. The segment at 208 to 211 (DTPG) is G3 motif. Residues 289–292 (AKAD) are G4 motif. 290–298 (KADTLTPPE) serves as a coordination point for GTP. S325 is subject to Phosphoserine. Residues G348 and R363 each contribute to the GTP site. Residues 428-448 (LTRESGTDFPIPAVPPGTDPE) are disordered. The residue at position 432 (S432) is a Phosphoserine. The residue at position 434 (T434) is a Phosphothreonine. A coiled-coil region spans residues 446–478 (DPETEKLIREKDEELRRMQEILHKIQKQMKETY).

Belongs to the TRAFAC class TrmE-Era-EngA-EngB-Septin-like GTPase superfamily. Septin GTPase family. In terms of assembly, septins polymerize into heterooligomeric protein complexes that form filaments, and can associate with cellular membranes, actin filaments and microtubules. GTPase activity is required for filament formation. Interacts with SEPTIN8. Component of a septin core octameric complex consisting of SEPTIN12, SEPTIN7, SEPTIN6 and SEPTIN2 or SEPTIN4 in the order 12-7-6-2-2-6-7-12 or 12-7-6-4-4-6-7-12. Interacts with SEPTIN14 (via C-terminus). Interacts with DYRK1A. Interacts with SLC6A3/DAT and SNCA/alpha-synuclein. Interacts with STX1A; in the striatum. Interacts with XIAP (via BIR3 domain) following the induction of apoptosis. Interacts with AREL1 (via HECT domain); in the cytoplasm following induction of apoptosis. Ubiquitinated by AREL1. In terms of processing, phosphorylated by DYRK1A.

It is found in the cytoplasm. It localises to the cell projection. The protein resides in the cilium. Its subcellular location is the flagellum. The protein localises to the cytoplasmic vesicle. It is found in the secretory vesicle. It localises to the axon. The protein resides in the dendrite. Its subcellular location is the perikaryon. The protein localises to the synapse. Its function is as follows. Filament-forming cytoskeletal GTPase. Pro-apoptotic protein involved in LGR5-positive intestinal stem cell and Paneth cell expansion in the intestines, via its interaction with XIAP. May also play a role in the regulation of cell fate in the intestine. Positive regulator of apoptosis involved in hematopoietic stem cell homeostasis; via its interaction with XIAP. Negative regulator of repair and hair follicle regeneration in response to injury, due to inhibition of hair follicle stem cell proliferation, potentially via its interaction with XIAP. Plays an important role in male fertility and sperm motility. During spermiogenesis, essential for the establishment of the annulus (a fibrous ring structure connecting the midpiece and the principal piece of the sperm flagellum) which is a requisite for the structural and mechanical integrity of the sperm. Involved in the migration of cortical neurons and the formation of neuron leading processes during embryonic development. Required for dopaminergic metabolism in presynaptic autoreceptors; potentially via activity as a presynaptic scaffold protein. This is Septin-4 from Macaca fascicularis (Crab-eating macaque).